The following is a 402-amino-acid chain: Envelope glycoprotein D (402 aa).

The first 30 residues, 1–30 (MSTFKLMMDGRLVFAMAIAILSVVLSCGTC), serve as a signal peptide directing secretion. The Virion surface segment spans residues 31–355 (EKAKRAVRGR…NSTFVGISVG (325 aa)). Residues asparagine 53 and asparagine 61 are each glycosylated (N-linked (GlcNAc...) asparagine; by host). Cystine bridges form between cysteine 88/cysteine 209, cysteine 126/cysteine 223, and cysteine 138/cysteine 147. The disordered stretch occupies residues 281-315 (PDNHPGFDSVESEITQNKTDPKPGQADPKPNQPFK). N-linked (GlcNAc...) asparagine; by host glycosylation is found at asparagine 297 and asparagine 346. Residues 356-372 (LGIAGLVLVGVILYVCL) form a helical membrane-spanning segment. At 373–402 (RRKKELKKSAQNGLTRLRSTFKDVKYTQLP) the chain is on the intravirion side.

This sequence belongs to the herpesviridae glycoprotein D family.

It is found in the virion membrane. Functionally, envelope glycoprotein that binds to host cell entry receptors, promoting the virus entry into host cells. May trigger fusion with host membrane, by recruiting the fusion machinery composed of gB and gH/gL. The chain is Envelope glycoprotein D (gD) from Equus caballus (Horse).